A 363-amino-acid chain; its full sequence is Hydroxycarboxylic acid receptor 2 (363 aa).

Residues 1 to 33 (MNRHHLQDHFLEIDKKNCCVFRDDFIVKVLPPV) are Extracellular-facing. Residues 34–54 (LGLEFIFGLLGNGLALWIFCF) form a helical membrane-spanning segment. Topologically, residues 55 to 63 (HLKSWKSSR) are cytoplasmic. The chain crosses the membrane as a helical span at residues 64-84 (IFLFNLAVADFLLIICLPFLM). At 85-102 (DNYVRRWDWKFGDIPCRL) the chain is on the extracellular side. A disulfide bridge connects residues cysteine 100 and cysteine 177. The chain crosses the membrane as a helical span at residues 103-123 (MLFMLAMNRQGSIIFLTVVAV). Over 124–142 (DRYFRVVHPHHALNKISNR) the chain is Cytoplasmic. Residues 143-163 (TAAIISCLLWGITIGLTVHLL) traverse the membrane as a helical segment. Over 164–192 (KKKMPIQNGGANLCSSFSICHTFQWHEAM) the chain is Extracellular. Residues 193–213 (FLLEFFLPLGIILFCSARIIW) form a helical membrane-spanning segment. At 214 to 229 (SLRQRQMDRHAKIKRA) the chain is on the cytoplasmic side. A helical transmembrane segment spans residues 230–250 (ITFIMVVAIVFVICFLPSVVV). At 251–273 (RIRIFWLLHTSGTQNCEVYRSVD) the chain is on the extracellular side. The chain crosses the membrane as a helical span at residues 274–294 (LAFFITLSFTYMNSMLDPVVY). Residues 295-363 (YFSSPSFPNF…SPSYLGPTSP (69 aa)) lie on the Cytoplasmic side of the membrane. Residues 319 to 363 (GEPDNNRSTSVELTGDPNKTRGAPEALMANSGEPWSPSYLGPTSP) form a disordered region. A Phosphoserine modification is found at serine 328.

This sequence belongs to the G-protein coupled receptor 1 family. Expression largely restricted to adipose tissue and spleen. Expressed on mature neutrophils but not on immature neutrophils or eosinophils.

It is found in the cell membrane. Functionally, acts as a high affinity receptor for both nicotinic acid (also known as niacin) and (D)-beta-hydroxybutyrate and mediates increased adiponectin secretion and decreased lipolysis through G(i)-protein-mediated inhibition of adenylyl cyclase. This pharmacological effect requires nicotinic acid doses that are much higher than those provided by a normal diet. Mediates nicotinic acid-induced apoptosis in mature neutrophils. Receptor activation by nicotinic acid results in reduced cAMP levels which may affect activity of cAMP-dependent protein kinase A and phosphorylation of target proteins, leading to neutrophil apoptosis. The rank order of potency for the displacement of nicotinic acid binding is 5-methyl pyrazole-3-carboxylic acid = pyridine-3-acetic acid &gt; acifran &gt; 5-methyl nicotinic acid = acipimox &gt;&gt; nicotinuric acid = nicotinamide. The chain is Hydroxycarboxylic acid receptor 2 (HCAR2) from Homo sapiens (Human).